A 388-amino-acid polypeptide reads, in one-letter code: GTPase Obg (388 aa).

Residues 4-162 (SNFVDYVKIY…MTVIMELKLL (159 aa)) form the Obg domain. Residues 163-329 (ADVGLVGFPN…LKDILWEELN (167 aa)) form the OBG-type G domain. GTP is bound by residues 169–176 (GFPNAGKS), 194–198 (FTTLE), 216–219 (DIPG), 283–286 (TKSD), and 310–312 (SSV). The Mg(2+) site is built by S176 and T196. The disordered stretch occupies residues 352-388 (LKDMGEDEELDYEYEEDADDEDDDLDYEYEEEDWEEK). Acidic residues predominate over residues 356-388 (GEDEELDYEYEEDADDEDDDLDYEYEEEDWEEK).

Belongs to the TRAFAC class OBG-HflX-like GTPase superfamily. OBG GTPase family. In terms of assembly, monomer. Requires Mg(2+) as cofactor.

The protein localises to the cytoplasm. Its function is as follows. An essential GTPase which binds GTP, GDP and possibly (p)ppGpp with moderate affinity, with high nucleotide exchange rates and a fairly low GTP hydrolysis rate. Plays a role in control of the cell cycle, stress response, ribosome biogenesis and in those bacteria that undergo differentiation, in morphogenesis control. This chain is GTPase Obg, found in Bacteroides thetaiotaomicron (strain ATCC 29148 / DSM 2079 / JCM 5827 / CCUG 10774 / NCTC 10582 / VPI-5482 / E50).